The sequence spans 364 residues: Mannose-1-phosphate guanyltransferase (364 aa).

It belongs to the transferase hexapeptide repeat family.

It localises to the cytoplasm. The catalysed reaction is alpha-D-mannose 1-phosphate + GTP + H(+) = GDP-alpha-D-mannose + diphosphate. Its pathway is nucleotide-sugar biosynthesis; GDP-alpha-D-mannose biosynthesis; GDP-alpha-D-mannose from alpha-D-mannose 1-phosphate (GTP route): step 1/1. Involved in cell wall synthesis where it is required for glycosylation. Involved in cell cycle progression through cell-size checkpoint. The polypeptide is Mannose-1-phosphate guanyltransferase (mpg1) (Emericella nidulans (strain FGSC A4 / ATCC 38163 / CBS 112.46 / NRRL 194 / M139) (Aspergillus nidulans)).